Consider the following 169-residue polypeptide: Neudesin (169 aa).

The N-terminal stretch at 1 to 28 is a signal peptide; sequence MAGPAPGRRLVALALIVALAVGLPTAGA. In terms of domain architecture, Cytochrome b5 heme-binding spans 41-126; that stretch reads VRLFTEEELA…EELESLDDVF (86 aa). K133 carries the post-translational modification N6-acetyllysine. Positions 148-169 are disordered; sequence DGSPNLDFKPEDQPHFDIKDEF. Over residues 155–169 the composition is skewed to basic and acidic residues; it reads FKPEDQPHFDIKDEF.

It belongs to the cytochrome b5 family. MAPR subfamily. In terms of assembly, interacts with PINK1 and PARK7.

The protein resides in the secreted. It is found in the extracellular space. The protein localises to the mitochondrion. Its subcellular location is the endoplasmic reticulum. Its function is as follows. Acts as a neurotrophic factor in postnatal mature neurons enhancing neuronal survival. Promotes cell proliferation and neurogenesis in undifferentiated neural progenitor cells at the embryonic stage and inhibits differentiation of astrocytes. Its neurotrophic activity is exerted via MAPK1/ERK2, MAPK3/ERK1 and AKT1/AKT pathways. Neurotrophic activity is enhanced by binding to heme. Also acts as an anorexigenic neurotrophic factor that contributes to energy balance. This is Neudesin (NENF) from Bos taurus (Bovine).